The primary structure comprises 148 residues: Large ribosomal subunit protein uL22c (148 aa).

It belongs to the universal ribosomal protein uL22 family. Part of the 50S ribosomal subunit.

The protein resides in the plastid. It localises to the chloroplast. Its function is as follows. This protein binds specifically to 23S rRNA. The globular domain of the protein is located near the polypeptide exit tunnel on the outside of the subunit, while an extended beta-hairpin is found that lines the wall of the exit tunnel in the center of the 70S ribosome. The polypeptide is Large ribosomal subunit protein uL22c (rpl22) (Triticum aestivum (Wheat)).